Here is a 363-residue protein sequence, read N- to C-terminus: Isopentenyl-diphosphate delta-isomerase (363 aa).

7-8 contributes to the substrate binding site; the sequence is RK. FMN contacts are provided by residues 71–73, Ser101, and Asn130; that span reads AMT. Gln160 contributes to the substrate binding site. Position 161 (Glu161) interacts with Mg(2+). FMN is bound by residues Lys192, Ser217, Thr222, 270–272, and 291–292; these read GIR and AG.

It belongs to the IPP isomerase type 2 family. As to quaternary structure, homooctamer. Dimer of tetramers. Requires FMN as cofactor. NADPH is required as a cofactor. The cofactor is Mg(2+).

It is found in the cytoplasm. The catalysed reaction is isopentenyl diphosphate = dimethylallyl diphosphate. Involved in the biosynthesis of isoprenoids. Catalyzes the 1,3-allylic rearrangement of the homoallylic substrate isopentenyl (IPP) to its allylic isomer, dimethylallyl diphosphate (DMAPP). The protein is Isopentenyl-diphosphate delta-isomerase of Symbiobacterium thermophilum (strain DSM 24528 / JCM 14929 / IAM 14863 / T).